Here is a 289-residue protein sequence, read N- to C-terminus: D-alanine aminotransferase (289 aa).

Residue Y31 coordinates substrate. R50 is a pyridoxal 5'-phosphate binding site. Substrate is bound by residues R99 and H101. K147 functions as the Proton acceptor in the catalytic mechanism. K147 carries the N6-(pyridoxal phosphate)lysine modification. Residue E179 coordinates pyridoxal 5'-phosphate.

It belongs to the class-IV pyridoxal-phosphate-dependent aminotransferase family. Homodimer. Pyridoxal 5'-phosphate serves as cofactor.

The enzyme catalyses D-alanine + 2-oxoglutarate = D-glutamate + pyruvate. Its function is as follows. Acts on the D-isomers of alanine, leucine, aspartate, glutamate, aminobutyrate, norvaline and asparagine. The enzyme transfers an amino group from a substrate D-amino acid to the pyridoxal phosphate cofactor to form pyridoxamine and an alpha-keto acid in the first half-reaction. The second half-reaction is the reverse of the first, transferring the amino group from the pyridoxamine to a second alpha-keto acid to form the product D-amino acid via a ping-pong mechanism. This is an important process in the formation of D-alanine and D-glutamate, which are essential bacterial cell wall components. This is D-alanine aminotransferase (dat) from Listeria innocua serovar 6a (strain ATCC BAA-680 / CLIP 11262).